Reading from the N-terminus, the 350-residue chain is GDSL esterase/lipase At4g10955 (350 aa).

Belongs to the 'GDSL' lipolytic enzyme family.

The sequence is that of GDSL esterase/lipase At4g10955 from Arabidopsis thaliana (Mouse-ear cress).